The primary structure comprises 299 residues: Oxygen-dependent coproporphyrinogen-III oxidase (299 aa).

Ser92 is a binding site for substrate. Residues His96 and His106 each coordinate Mn(2+). Catalysis depends on His106, which acts as the Proton donor. 108-110 (NVR) serves as a coordination point for substrate. Residues His145 and His175 each coordinate Mn(2+). An important for dimerization region spans residues 240-275 (YVEFNLVWDRGTLFGLQTGGRTESILMSMPPLVRWE). Residue 258 to 260 (GGR) coordinates substrate.

The protein belongs to the aerobic coproporphyrinogen-III oxidase family. In terms of assembly, homodimer. Mn(2+) is required as a cofactor.

The protein localises to the cytoplasm. It carries out the reaction coproporphyrinogen III + O2 + 2 H(+) = protoporphyrinogen IX + 2 CO2 + 2 H2O. The protein operates within porphyrin-containing compound metabolism; protoporphyrin-IX biosynthesis; protoporphyrinogen-IX from coproporphyrinogen-III (O2 route): step 1/1. Its function is as follows. Involved in the heme biosynthesis. Catalyzes the aerobic oxidative decarboxylation of propionate groups of rings A and B of coproporphyrinogen-III to yield the vinyl groups in protoporphyrinogen-IX. This chain is Oxygen-dependent coproporphyrinogen-III oxidase, found in Escherichia coli O157:H7.